We begin with the raw amino-acid sequence, 251 residues long: MAAHLLIVDALNLIRRIHAVQGSPCVETCQHALDQLIIHSQPTHAVAVFDDDARSSGWRHQRLPDYKAGRPPMPDDLHNEMPALRAAFEQRGVRCWASDGNEADDLAATLALKVTEAGHQATIVSTDKGYCQLLSPGLRIRDYFQKRWLDAPFIEKEFGVLPRQLPDYWGLAGISSSKVPGVAGIGPKSATQLLIQFQNLEGIYAHLDEVPEKWRKKLETHKEMAFLCRDIARLQTDLHIDGNLQQLRLAR.

Aspartate 104 is a binding site for Mg(2+). In terms of domain architecture, 5'-3' exonuclease spans 160–249 (VLPRQLPDYW…IDGNLQQLRL (90 aa)). Residues leucine 171, alanine 172, proline 180, valine 182, and isoleucine 185 each contribute to the K(+) site. The interaction with DNA stretch occupies residues 184 to 189 (GIGPKS).

It belongs to the Xni family. The cofactor is Mg(2+). It depends on K(+) as a cofactor.

Functionally, has flap endonuclease activity. During DNA replication, flap endonucleases cleave the 5'-overhanging flap structure that is generated by displacement synthesis when DNA polymerase encounters the 5'-end of a downstream Okazaki fragment. The polypeptide is Flap endonuclease Xni (Salmonella typhimurium (strain LT2 / SGSC1412 / ATCC 700720)).